Reading from the N-terminus, the 389-residue chain is Glutamate 5-kinase (389 aa).

Residue K16 participates in ATP binding. Substrate contacts are provided by S56, D143, and N155. Residue 175 to 176 (SD) participates in ATP binding. The PUA domain occupies 281–358 (AGELHVDEGA…AEIEAILGYA (78 aa)).

The protein belongs to the glutamate 5-kinase family.

It localises to the cytoplasm. The catalysed reaction is L-glutamate + ATP = L-glutamyl 5-phosphate + ADP. Its pathway is amino-acid biosynthesis; L-proline biosynthesis; L-glutamate 5-semialdehyde from L-glutamate: step 1/2. Functionally, catalyzes the transfer of a phosphate group to glutamate to form L-glutamate 5-phosphate. The sequence is that of Glutamate 5-kinase from Rhizobium rhizogenes (strain K84 / ATCC BAA-868) (Agrobacterium radiobacter).